The chain runs to 882 residues: Translation initiation factor IF-2 (882 aa).

Disordered regions lie at residues 67–202 and 223–278; these read KTVS…EKAR and ERYG…KHMK. Composition is skewed to basic and acidic residues over residues 95-152 and 161-202; these read VKRD…EAKA and EQPK…EKAR. Residues 251-264 are compositionally biased toward basic residues; the sequence is GRRNRNKTQTKSKR. Residues 265-274 are compositionally biased toward basic and acidic residues; the sequence is GGKDAREGRE. Positions 382–551 constitute a tr-type G domain; the sequence is PRAPVVTIMG…LLQAEVLELK (170 aa). Residues 391–398 are G1; the sequence is GHVDHGKT. 391 to 398 lines the GTP pocket; it reads GHVDHGKT. The interval 416–420 is G2; the sequence is GITQH. The G3 stretch occupies residues 437–440; it reads DTPG. Residues 437-441 and 491-494 contribute to the GTP site; these read DTPGH and NKMD. Positions 491-494 are G4; sequence NKMD. The segment at 527–529 is G5; that stretch reads SAK.

It belongs to the TRAFAC class translation factor GTPase superfamily. Classic translation factor GTPase family. IF-2 subfamily.

Its subcellular location is the cytoplasm. In terms of biological role, one of the essential components for the initiation of protein synthesis. Protects formylmethionyl-tRNA from spontaneous hydrolysis and promotes its binding to the 30S ribosomal subunits. Also involved in the hydrolysis of GTP during the formation of the 70S ribosomal complex. In Shewanella amazonensis (strain ATCC BAA-1098 / SB2B), this protein is Translation initiation factor IF-2.